A 373-amino-acid chain; its full sequence is Forkhead box protein E1 (373 aa).

Residues 19–51 form a disordered region; sequence KEERGETAAGAGVPGEATGRGAGGRRRKRPLQR. Basic residues predominate over residues 41–50; sequence GGRRRKRPLQ. The fork-head DNA-binding region spans 53-147; that stretch reads KPPYSYIALI…ESGSFLRRRK (95 aa).

Phosphorylated. Detected in adult brain, placenta, lung, liver, skeletal muscle, kidney, pancreas, heart, colon, small intestine testis and thymus. Expression was strongest in heart and pancreas.

The protein resides in the nucleus. In terms of biological role, transcription factor that binds consensus sites on a variety of gene promoters and activate their transcription. Involved in proper palate formation, most probably through the expression of MSX1 and TGFB3 genes which are direct targets of this transcription factor. Also implicated in thyroid gland morphogenesis. May indirectly play a role in cell growth and migration through the regulation of WNT5A expression. The sequence is that of Forkhead box protein E1 (FOXE1) from Homo sapiens (Human).